Reading from the N-terminus, the 329-residue chain is GTP 3',8-cyclase (329 aa).

The Radical SAM core domain occupies 8–234 (AFARKFYYLR…QLRQRSDGPA (227 aa)). Position 17 (Arg17) interacts with GTP. The [4Fe-4S] cluster site is built by Cys24 and Cys28. Tyr30 serves as a coordination point for S-adenosyl-L-methionine. [4Fe-4S] cluster is bound at residue Cys31. Arg68 contacts GTP. Gly72 is an S-adenosyl-L-methionine binding site. Thr99 is a binding site for GTP. Ser123 lines the S-adenosyl-L-methionine pocket. Lys160 is a GTP binding site. Met194 is a binding site for S-adenosyl-L-methionine. Positions 257 and 260 each coordinate [4Fe-4S] cluster. Residue 262–264 (RLR) participates in GTP binding. [4Fe-4S] cluster is bound at residue Cys274.

The protein belongs to the radical SAM superfamily. MoaA family. As to quaternary structure, monomer and homodimer. [4Fe-4S] cluster serves as cofactor.

The catalysed reaction is GTP + AH2 + S-adenosyl-L-methionine = (8S)-3',8-cyclo-7,8-dihydroguanosine 5'-triphosphate + 5'-deoxyadenosine + L-methionine + A + H(+). It functions in the pathway cofactor biosynthesis; molybdopterin biosynthesis. In terms of biological role, catalyzes the cyclization of GTP to (8S)-3',8-cyclo-7,8-dihydroguanosine 5'-triphosphate. The sequence is that of GTP 3',8-cyclase from Escherichia fergusonii (strain ATCC 35469 / DSM 13698 / CCUG 18766 / IAM 14443 / JCM 21226 / LMG 7866 / NBRC 102419 / NCTC 12128 / CDC 0568-73).